We begin with the raw amino-acid sequence, 379 residues long: Queuine tRNA-ribosyltransferase (379 aa).

Residue D94 is the Proton acceptor of the active site. Substrate contacts are provided by residues 94–98 (DSGGF), D148, Q191, and G218. Residues 249–255 (GVGSPDA) are RNA binding. D268 serves as the catalytic Nucleophile. Residues 273–277 (TRIAR) are RNA binding; important for wobble base 34 recognition. Positions 306, 308, 311, and 337 each coordinate Zn(2+).

Belongs to the queuine tRNA-ribosyltransferase family. In terms of assembly, homodimer. Within each dimer, one monomer is responsible for RNA recognition and catalysis, while the other monomer binds to the replacement base PreQ1. The cofactor is Zn(2+).

The enzyme catalyses 7-aminomethyl-7-carbaguanine + guanosine(34) in tRNA = 7-aminomethyl-7-carbaguanosine(34) in tRNA + guanine. It functions in the pathway tRNA modification; tRNA-queuosine biosynthesis. Catalyzes the base-exchange of a guanine (G) residue with the queuine precursor 7-aminomethyl-7-deazaguanine (PreQ1) at position 34 (anticodon wobble position) in tRNAs with GU(N) anticodons (tRNA-Asp, -Asn, -His and -Tyr). Catalysis occurs through a double-displacement mechanism. The nucleophile active site attacks the C1' of nucleotide 34 to detach the guanine base from the RNA, forming a covalent enzyme-RNA intermediate. The proton acceptor active site deprotonates the incoming PreQ1, allowing a nucleophilic attack on the C1' of the ribose to form the product. After dissociation, two additional enzymatic reactions on the tRNA convert PreQ1 to queuine (Q), resulting in the hypermodified nucleoside queuosine (7-(((4,5-cis-dihydroxy-2-cyclopenten-1-yl)amino)methyl)-7-deazaguanosine). This Staphylococcus aureus (strain bovine RF122 / ET3-1) protein is Queuine tRNA-ribosyltransferase.